Here is a 320-residue protein sequence, read N- to C-terminus: Delta(7)-sterol 5(6)-desaturase erg3C (320 aa).

The next 3 membrane-spanning stretches (helical) occupy residues 43 to 63 (VISI…FFSA), 91 to 111 (SSLS…LAEV), and 127 to 147 (PWLV…IYWI). In terms of domain architecture, Fatty acid hydroxylase spans 134-283 (ILYMAFNDIG…FTWADAYFGS (150 aa)). The short motif at 148-152 (HRLEH) is the Histidine box-1 element. Residues 161 to 165 (HKPHH) carry the Histidine box-2 motif. The chain crosses the membrane as a helical span at residues 224 to 244 (YMVLFAAVQIWTILIHDGDMI). The Histidine box-3 signature appears at 259-263 (HTLHH).

It belongs to the sterol desaturase family. Fe cation is required as a cofactor.

It localises to the endoplasmic reticulum membrane. In terms of biological role, delta(7)-sterol 5(6)-desaturase; part of the third module of ergosterol biosynthesis pathway that includes the late steps of the pathway. Erg3C is a minor delta(7)-sterol 5(6)-desaturase within the ergosterol pathway, erg3B being the major one. The third module or late pathway involves the ergosterol synthesis itself through consecutive reactions that mainly occur in the endoplasmic reticulum (ER) membrane. Firstly, the squalene synthase erg9 catalyzes the condensation of 2 farnesyl pyrophosphate moieties to form squalene, which is the precursor of all steroids. Squalene synthase is crucial for balancing the incorporation of farnesyl diphosphate (FPP) into sterol and nonsterol isoprene synthesis. Secondly, squalene is converted into lanosterol by the consecutive action of the squalene epoxidase erg1 and the lanosterol synthase erg7. Then, the delta(24)-sterol C-methyltransferase erg6 methylates lanosterol at C-24 to produce eburicol. Eburicol is the substrate of the sterol 14-alpha demethylase encoded by cyp51A and cyp51B, to yield 4,4,24-trimethyl ergosta-8,14,24(28)-trienol. The C-14 reductase erg24 then reduces the C14=C15 double bond which leads to 4,4-dimethylfecosterol. A sequence of further demethylations at C-4, involving the C-4 demethylation complex containing the C-4 methylsterol oxidases erg25A or erg25B, the sterol-4-alpha-carboxylate 3-dehydrogenase erg26 and the 3-keto-steroid reductase erg27, leads to the production of fecosterol via 4-methylfecosterol. The C-8 sterol isomerase erg2 then catalyzes the reaction which results in unsaturation at C-7 in the B ring of sterols and thus converts fecosterol to episterol. The sterol-C5-desaturase erg3B then catalyzes the introduction of a C-5 double bond in the B ring to produce 5-dehydroepisterol. The 2 other sterol-C5-desaturases, erg3A and erg3C, seem to be less important in ergosterol biosynthesis. The C-22 sterol desaturase erg5 further converts 5-dehydroepisterol into ergosta-5,7,22,24(28)-tetraen-3beta-ol by forming the C-22(23) double bond in the sterol side chain. Finally, ergosta-5,7,22,24(28)-tetraen-3beta-ol is substrate of the C-24(28) sterol reductases erg4A and erg4B to produce ergosterol. Possible alternative sterol biosynthetic pathways might exist from fecosterol to ergosterol, depending on the activities of the erg3 isoforms. This Aspergillus fumigatus (strain ATCC MYA-4609 / CBS 101355 / FGSC A1100 / Af293) (Neosartorya fumigata) protein is Delta(7)-sterol 5(6)-desaturase erg3C.